Reading from the N-terminus, the 409-residue chain is Snake venom metalloproteinase BITM02A (409 aa).

Positions 1–20 (MIEVLLVTICLAAFPYQGSS) are cleaved as a signal peptide. Positions 21–189 (IILESGNVND…KKASQSNLTP (169 aa)) are excised as a propeptide. The region spanning 193 to 389 (RYIELFIVVD…ENPQCILNKR (197 aa)) is the Peptidase M12B domain. Glu-196 and Asp-280 together coordinate Ca(2+). Cystine bridges form between Cys-304–Cys-384, Cys-344–Cys-368, and Cys-346–Cys-351. His-329 serves as a coordination point for Zn(2+). Glu-330 is an active-site residue. The Zn(2+) site is built by His-333 and His-339. 7 residues coordinate Ca(2+): Cys-384, Asn-387, Val-399, Asn-402, Leu-404, Glu-406, and Glu-409. Residues 390–409 (LRTDTVSTPVSGNELLEAGE) constitute a propeptide that is removed on maturation.

The protein belongs to the venom metalloproteinase (M12B) family. P-I subfamily. In terms of assembly, monomer. The cofactor is Zn(2+). As to expression, expressed by the venom gland.

It localises to the secreted. Snake venom metalloproteinase that impairs hemostasis in the envenomed animal. The sequence is that of Snake venom metalloproteinase BITM02A from Bothrops insularis (Golden lancehead).